The following is a 416-amino-acid chain: Serine/threonine-protein kinase 26 (416 aa).

Ala2 carries the N-acetylalanine modification. Position 4 is a phosphoserine (Ser4). The Protein kinase domain occupies 24-274; it reads FTKLERIGKG…AKELLKHKFI (251 aa). ATP is bound by residues 30 to 38 and Lys53; that span reads IGKGSFGEV. The Proton acceptor role is filled by Asp144. Residue Thr178 is modified to Phosphothreonine; by autocatalysis. Positions 297–340 are disordered; sequence EGHSDDESDSEGSDSESTSRENNTHPEWSFTTVRKKPDPKKVQN. A phosphoserine mark is found at Ser300, Ser304, Ser306, Ser309, and Ser325. Phosphothreonine occurs at positions 327 and 328.

The protein belongs to the protein kinase superfamily. STE Ser/Thr protein kinase family. STE20 subfamily. Homodimer. Interacts with PDCD10. Interacts with GOLGA2. Interacts with CTTNBP2NL. Interacts with RIPOR1 (via C-terminus); this interaction occurs in a PDCD10-dependent and Rho-independent manner. Interacts with PDCD10; this interaction is required for the association of STK26 with RIPOR1. Part of the core of STRIPAK complexes composed of PP2A catalytic and scaffolding subunits, the striatins (PP2A regulatory subunits), the striatin-associated proteins MOB4, STRIP1 and STRIP2, PDCD10 and members of the STE20 kinases, such as STK24 and STK26. The cofactor is Mg(2+).

The protein localises to the cytoplasm. The protein resides in the golgi apparatus. It catalyses the reaction L-seryl-[protein] + ATP = O-phospho-L-seryl-[protein] + ADP + H(+). It carries out the reaction L-threonyl-[protein] + ATP = O-phospho-L-threonyl-[protein] + ADP + H(+). With respect to regulation, interaction with Golgi matrix protein GOLGA2 leads to autophosphorylation on Thr-178, possibly as a consequence of stabilization of dimer formation. May also be activated by C-terminal cleavage. Its function is as follows. Serine/threonine-protein kinase that acts as a mediator of cell growth. Modulates apoptosis. In association with STK24 negatively regulates Golgi reorientation in polarized cell migration upon RHO activation. Phosphorylates ATG4B at 'Ser-383', thereby increasing autophagic flux. Part of the striatin-interacting phosphatase and kinase (STRIPAK) complexes. STRIPAK complexes have critical roles in protein (de)phosphorylation and are regulators of multiple signaling pathways including Hippo, MAPK, nuclear receptor and cytoskeleton remodeling. Different types of STRIPAK complexes are involved in a variety of biological processes such as cell growth, differentiation, apoptosis, metabolism and immune regulation. The chain is Serine/threonine-protein kinase 26 from Homo sapiens (Human).